The primary structure comprises 109 residues: Flagellar hook-basal body complex protein FliE (109 aa).

Belongs to the FliE family.

It localises to the bacterial flagellum basal body. The polypeptide is Flagellar hook-basal body complex protein FliE (Pseudomonas fluorescens (strain Pf0-1)).